We begin with the raw amino-acid sequence, 492 residues long: Catalase isozyme 2 (492 aa).

Active-site residues include histidine 65 and asparagine 138. Tyrosine 348 contacts heme.

The protein belongs to the catalase family. Homotetramer. Heme is required as a cofactor.

It localises to the peroxisome. The protein resides in the glyoxysome. The enzyme catalyses 2 H2O2 = O2 + 2 H2O. Its function is as follows. Occurs in almost all aerobically respiring organisms and serves to protect cells from the toxic effects of hydrogen peroxide. In Solanum tuberosum (Potato), this protein is Catalase isozyme 2 (CAT2).